The primary structure comprises 782 residues: Formin-like protein 9 (782 aa).

The N-terminal stretch at 1-24 is a signal peptide; the sequence is MQNFWFAIFFFLLTCAPPSPLSYA. A helical transmembrane segment spans residues 102-122; the sequence is LLLPALSAVLVIATVIGLALF. Disordered regions lie at residues 191–223, 264–287, and 387–407; these read DSPE…EEEE, MSPP…RLRV, and SSSQ…PPLV. Residues 214-223 show a composition bias toward acidic residues; that stretch reads EVNEEDEEEE. Residues 396 to 407 are compositionally biased toward pro residues; that stretch reads ALPPPTRPPPLV. Residues 406–782 enclose the FH2 domain; that stretch reads LVPPSQPFVV…LDQVCKEMGD (377 aa).

The protein belongs to the formin-like family. Class-I subfamily.

It localises to the membrane. Might be involved in the organization and polarity of the actin cytoskeleton. In Arabidopsis thaliana (Mouse-ear cress), this protein is Formin-like protein 9 (FH9).